Here is a 159-residue protein sequence, read N- to C-terminus: RNA pyrophosphohydrolase (159 aa).

In terms of domain architecture, Nudix hydrolase spans 6-149 (GFRPNVGIIL…KREVYRRALK (144 aa)). Residues 38–59 (GGINARETPEEALFRELNEEVG) carry the Nudix box motif.

The protein belongs to the Nudix hydrolase family. RppH subfamily. A divalent metal cation serves as cofactor.

Accelerates the degradation of transcripts by removing pyrophosphate from the 5'-end of triphosphorylated RNA, leading to a more labile monophosphorylated state that can stimulate subsequent ribonuclease cleavage. In Stutzerimonas stutzeri (strain A1501) (Pseudomonas stutzeri), this protein is RNA pyrophosphohydrolase.